The chain runs to 1180 residues: Polyamine-transporting ATPase 13A2 (1180 aa).

The Cytoplasmic portion of the chain corresponds to 1 to 44 (MSADSSPLVGSTPTGYGTLTIGTSIDPLSSSVSSVRLSGYCGSP). Residues 45–65 (WRVIGYHVVVWMMAGIPLLLF) lie within the membrane without spanning it. Topologically, residues 66–235 (RWKPLWGVRL…KSYPQLLVDE (170 aa)) are cytoplasmic. Serine 151 is modified (phosphoserine). A helical membrane pass occupies residues 236–253 (ALNPYYGFQAFSIALWLA). Residues 254–256 (DHY) are Lumenal-facing. A helical membrane pass occupies residues 257–276 (YWYALCIFLISSISICLSLY). At 277–427 (KTRKQSQTLR…NFKFYKHSMK (151 aa)) the chain is on the cytoplasmic side. The helical transmembrane segment at 428–448 (FVAALSVLALLGTIYSIFILY) threads the bilayer. The Lumenal portion of the chain corresponds to 449 to 463 (RNRVPLNEIVIRALD). Residues 464-484 (LVTVVVPPALPAAMTVCTLYA) form a helical membrane-spanning segment. At 485–930 (QSRLRRQGIF…REGRCSLDTS (446 aa)) the chain is on the cytoplasmic side. Aspartate 513 functions as the 4-aspartylphosphate intermediate in the catalytic mechanism. Residues aspartate 878 and aspartate 882 each contribute to the Mg(2+) site. The helical transmembrane segment at 931–951 (FSVFKYMALYSLTQFISVLIL) threads the bilayer. Over 952-957 (YTINTN) the chain is Lumenal. A helical membrane pass occupies residues 958–978 (LGDLQFLAIDLVITTTVAVLM). Over 979-994 (SRTGPALVLGRVRPPG) the chain is Cytoplasmic. The chain crosses the membrane as a helical span at residues 995–1015 (ALLSVPVLSSLLLQMVLVTGV). The Lumenal portion of the chain corresponds to 1016–1048 (QLGGYFLTLAQPWFVPLNRTVAAPDNLPNYENT). The N-linked (GlcNAc...) asparagine glycan is linked to asparagine 1033. The chain crosses the membrane as a helical span at residues 1049–1069 (VVFSLSSFQYLILAAAVSKGA). Over 1070–1080 (PFRRPLYTNVP) the chain is Cytoplasmic. Residues 1081 to 1101 (FLVALALLSSVLVGLVLVPGL) traverse the membrane as a helical segment. Topologically, residues 1102 to 1117 (LQGPLALRNITDTGFK) are lumenal. A glycan (N-linked (GlcNAc...) asparagine) is linked at asparagine 1110. A helical membrane pass occupies residues 1118–1138 (LLLLGLVTLNFVGAFMLESVL). Residues 1139 to 1180 (DQCLPACLRRLRPKRASKKRFKQLERELAEQPWPPLPAGPLR) are Cytoplasmic-facing.

Belongs to the cation transport ATPase (P-type) (TC 3.A.3) family. Type V subfamily. Interacts with MYCBP2; the interaction inhibits the ubiquitination of TSC2 by MYCBP2. Interacts with HDAC6; the interaction results in recruitment of HDAC6 to lysosomes to promote CTTN deacetylation. Autophosphorylated. Accumulates in an inactive autophosphorylated state and autophosphorylation is stimulated by phosphatidic acid and phosphatidylinositol 3,5-bisphosphate but not by Mn(2+) or Zn(2+). The presence of spermine results in a dose-dependent reduction in autophosphorylation. As to expression, expressed in brain; protein levels are markedly increased in brain from subjects with Parkinson disease and subjects with dementia with Lewy bodies. Detected in pyramidal neurons located throughout the cingulate cortex (at protein level). In the substantia nigra, it is found in neuromelanin-positive dopaminergic neurons (at protein level).

Its subcellular location is the lysosome membrane. It is found in the late endosome membrane. It localises to the endosome. The protein localises to the multivesicular body membrane. The protein resides in the cytoplasmic vesicle. Its subcellular location is the autophagosome membrane. The enzyme catalyses spermidine(out) + ATP + H2O = spermidine(in) + ADP + phosphate + H(+). It carries out the reaction spermine(out) + ATP + H2O = spermine(in) + ADP + phosphate + H(+). Its activity is regulated as follows. Accumulates in an inactive autophosphorylated state. The presence of spermine results in a dose-dependent reduction in autophosphorylation. ATPase which acts as a lysosomal polyamine exporter with high affinity for spermine. Also stimulates cellular uptake of polyamines and protects against polyamine toxicity. Plays a role in intracellular cation homeostasis and the maintenance of neuronal integrity. Contributes to cellular zinc homeostasis. Confers cellular protection against Mn(2+) and Zn(2+) toxicity and mitochondrial stress. Required for proper lysosomal and mitochondrial maintenance. Regulates the autophagy-lysosome pathway through the control of SYT11 expression at both transcriptional and post-translational levels. Facilitates recruitment of deacetylase HDAC6 to lysosomes to deacetylate CTTN, leading to actin polymerization, promotion of autophagosome-lysosome fusion and completion of autophagy. Promotes secretion of exosomes as well as secretion of SCNA via exosomes. Plays a role in lipid homeostasis. In Homo sapiens (Human), this protein is Polyamine-transporting ATPase 13A2.